Consider the following 96-residue polypeptide: Pyrimidine/purine nucleoside phosphorylase (96 aa).

Belongs to the nucleoside phosphorylase PpnP family.

It carries out the reaction a purine D-ribonucleoside + phosphate = a purine nucleobase + alpha-D-ribose 1-phosphate. It catalyses the reaction adenosine + phosphate = alpha-D-ribose 1-phosphate + adenine. The catalysed reaction is cytidine + phosphate = cytosine + alpha-D-ribose 1-phosphate. The enzyme catalyses guanosine + phosphate = alpha-D-ribose 1-phosphate + guanine. It carries out the reaction inosine + phosphate = alpha-D-ribose 1-phosphate + hypoxanthine. It catalyses the reaction thymidine + phosphate = 2-deoxy-alpha-D-ribose 1-phosphate + thymine. The catalysed reaction is uridine + phosphate = alpha-D-ribose 1-phosphate + uracil. The enzyme catalyses xanthosine + phosphate = alpha-D-ribose 1-phosphate + xanthine. Its function is as follows. Catalyzes the phosphorolysis of diverse nucleosides, yielding D-ribose 1-phosphate and the respective free bases. Can use uridine, adenosine, guanosine, cytidine, thymidine, inosine and xanthosine as substrates. Also catalyzes the reverse reactions. In Erwinia tasmaniensis (strain DSM 17950 / CFBP 7177 / CIP 109463 / NCPPB 4357 / Et1/99), this protein is Pyrimidine/purine nucleoside phosphorylase.